The primary structure comprises 326 residues: Malate dehydrogenase (326 aa).

12–18 (GAAGQIA) is a binding site for NAD(+). Substrate-binding residues include Arg93 and Arg99. NAD(+) contacts are provided by residues Asn106, Gln113, and 130-132 (VGN). Substrate contacts are provided by Asn132 and Arg163. Residue His188 is the Proton acceptor of the active site.

The protein belongs to the LDH/MDH superfamily. MDH type 2 family.

It carries out the reaction (S)-malate + NAD(+) = oxaloacetate + NADH + H(+). In terms of biological role, catalyzes the reversible oxidation of malate to oxaloacetate. In Corynebacterium diphtheriae (strain ATCC 700971 / NCTC 13129 / Biotype gravis), this protein is Malate dehydrogenase.